The primary structure comprises 306 residues: MKKLSLLLLVCLSLLGLFACTSKKTADKKLTVVATNSIIADITKNIAGNKVVLHSIVPVGRDPHEYEPLPEDVKKTSQADVIFYNGINLENGGNAWFTKLVKNAHKKTDKDYFAVSDSVKTIYLENAKEKGKEDPHAWLDLKNGIIYAKNIMKRLSEKDPKNKSYYQKNFQAYSAKLEKLHKVAKEKISRIPTEKKMIVTSEGCFKYFSKAYDIPSAYIWEINTEEEGTPNQIKALVKKLRKSRVSALFVESSVDDRPMKTVSKDTGIPIAAKIFTDSVAKKGQAGDSYYAMMKWNIDKIANGLSQ.

An N-terminal signal peptide occupies residues 1–19 (MKKLSLLLLVCLSLLGLFA). Cysteine 20 carries the N-palmitoyl cysteine lipid modification. The S-diacylglycerol cysteine moiety is linked to residue cysteine 20. The a divalent metal cation site is built by histidine 64, histidine 136, glutamate 202, and aspartate 277.

The protein belongs to the bacterial solute-binding protein 9 family. Lipoprotein receptor antigen (Lrai) subfamily.

Its subcellular location is the cell membrane. Part of the ATP-binding cassette (ABC) transport system SloABC involved in metal import. Binds a metal with high affinity and specificity and delivers it to the membrane permease for translocation into the cytoplasm. May act as an adhesin which is involved on adherence to extracellular matrix. It is an important factor in pathogenesis and infection. May contribute to the formation and accumulation of dental plaque. In Streptococcus mutans serotype c (strain ATCC 700610 / UA159), this protein is Metal ABC transporter substrate-binding lipoprotein SloC (sloC).